The primary structure comprises 323 residues: C-type lectin domain family 11 member A (323 aa).

Residues 1–21 (MQAAWLLGALVVPQLLGFGHG) form the signal peptide. 2 disordered regions span residues 55–106 (LGLP…TPED) and 272–295 (LGAQ…TLEN). The short motif at 61-63 (RGD) is the Cell attachment site element. Acidic residues predominate over residues 74-90 (EDWEMEEDQGEEEEEEA). In terms of domain architecture, C-type lectin spans 183 to 320 (LGHKCFLLSR…CQRRLYYVCE (138 aa)). 2 cysteine pairs are disulfide-bonded: cysteine 204–cysteine 319 and cysteine 296–cysteine 311.

Post-translationally, O-glycosylated. Probably sulfated on the O-glycans. In terms of tissue distribution, expressed in skeletal tissues including bone marrow, chondrocytes, primary ossification center-associated cells, the perichondrium and periosteum. Lower levels of expression were detected in spleen, thymus, appendix and fetal liver.

The protein localises to the cytoplasm. The protein resides in the secreted. Functionally, promotes osteogenesis by stimulating the differentiation of mesenchymal progenitors into mature osteoblasts. Important for repair and maintenance of adult bone. This Homo sapiens (Human) protein is C-type lectin domain family 11 member A (CLEC11A).